The following is a 249-amino-acid chain: 5'-nucleotidase SurE (249 aa).

4 residues coordinate a divalent metal cation: aspartate 8, aspartate 9, serine 39, and asparagine 91.

It belongs to the SurE nucleotidase family. The cofactor is a divalent metal cation.

The protein resides in the cytoplasm. It catalyses the reaction a ribonucleoside 5'-phosphate + H2O = a ribonucleoside + phosphate. Its function is as follows. Nucleotidase that shows phosphatase activity on nucleoside 5'-monophosphates. The chain is 5'-nucleotidase SurE from Pseudomonas fluorescens (strain Pf0-1).